Here is a 341-residue protein sequence, read N- to C-terminus: Two-component response regulator ORR30 (341 aa).

Residues 12–127 (RVLVIDDDCS…ELSNIWQHIF (116 aa)) enclose the Response regulatory domain. Residue aspartate 63 is modified to 4-aspartylphosphate. One can recognise an HTH myb-type domain in the interval 195-254 (DLGKSRLTWTTQLHRQFIAAVNHLGEDKAVPKKILGIMKVKHLTREQVASHLQKYRMQLK). The H-T-H motif DNA-binding region spans 225–250 (PKKILGIMKVKHLTREQVASHLQKYR).

It belongs to the ARR family. Type-B subfamily. In terms of processing, two-component system major event consists of a His-to-Asp phosphorelay between a sensor histidine kinase (HK) and a response regulator (RR). In plants, the His-to-Asp phosphorelay involves an additional intermediate named Histidine-containing phosphotransfer protein (HPt). This multistep phosphorelay consists of a His-Asp-His-Asp sequential transfer of a phosphate group between first a His and an Asp of the HK protein, followed by the transfer to a conserved His of the HPt protein and finally the transfer to an Asp in the receiver domain of the RR protein.

It localises to the nucleus. Its function is as follows. Transcriptional activator that acts as a floral inducer to promote short-day (SD) flowering pathway. Activates HD3A and other FT-like genes independently from HD1. May also activate MADS-box transcription factors involved in flowering regulation. Functions as a response regulator involved in His-to-Asp phosphorelay signal transduction system. Phosphorylation of the Asp residue in the receiver domain activates the ability of the protein to promote the transcription of target genes. May directly activate some type-A response regulators in response to cytokinins. This Oryza sativa subsp. japonica (Rice) protein is Two-component response regulator ORR30.